The following is a 277-amino-acid chain: Large ribosomal subunit protein uL2 (277 aa).

Residues 219–277 (TVRGSVMNPNDHPHGGGEGKAPVGRKAPSTPWGKPALGLKTRNKKAKSDKLIVRRRNEK) are disordered. Positions 264–277 (AKSDKLIVRRRNEK) are enriched in basic and acidic residues.

The protein belongs to the universal ribosomal protein uL2 family. In terms of assembly, part of the 50S ribosomal subunit. Forms a bridge to the 30S subunit in the 70S ribosome.

In terms of biological role, one of the primary rRNA binding proteins. Required for association of the 30S and 50S subunits to form the 70S ribosome, for tRNA binding and peptide bond formation. It has been suggested to have peptidyltransferase activity; this is somewhat controversial. Makes several contacts with the 16S rRNA in the 70S ribosome. The polypeptide is Large ribosomal subunit protein uL2 (Streptococcus pneumoniae serotype 2 (strain D39 / NCTC 7466)).